The following is a 373-amino-acid chain: MPPKQAQSKKTVEKEKKKKVEDKTFGLKNKNKSKKVAAYVSQVEAQVKHSGLQNKEAALKEKAKRDKELAEKAKKEAESILVNTIVQSKVPLGVDPKSIVCEYFKQGVTCPKGNRCKFAHDLAAGRKSEKIDIYTDRRKDEDTMENWDEAKLKSVVEKKRTTENKAKPTAIICKFFLDAIESKKYGWFWECPNGGEKCAYQHCLPEGYQLKKKKSREEDEVEEIPIEELIEEERAKLTKSTPVTLETFLRWKEEKRLQKEKAAKDAQDKRLADIKAGKTSMSGREMFVFNPDLFVDDESAIDTKSKEYEKSEEEIAALANQINTSLFTDGGVLPSDDDDDDDDDDDDDEDGDDEEEDDDEEEGEYEEEEASDE.

The interval 1-27 (MPPKQAQSKKTVEKEKKKKVEDKTFGL) is disordered. Positions 10 to 25 (KTVEKEKKKKVEDKTF) are enriched in basic and acidic residues. C3H1-type zinc fingers lie at residues 95-123 (DPKS…HDLA) and 167-205 (KPTA…HCLP). Residues 252–326 (KEEKRLQKEK…ALANQINTSL (75 aa)) are a coiled coil. The tract at residues 325 to 373 (SLFTDGGVLPSDDDDDDDDDDDDDEDGDDEEEDDDEEEGEYEEEEASDE) is disordered. The segment covering 335 to 373 (SDDDDDDDDDDDDDEDGDDEEEDDDEEEGEYEEEEASDE) has biased composition (acidic residues).

The protein belongs to the ZC3H15/TMA46 family.

The protein is Zinc finger CCCH domain-containing protein 15 homolog of Dictyostelium discoideum (Social amoeba).